Reading from the N-terminus, the 323-residue chain is 8-oxo-dGDP phosphatase NUDT18 (323 aa).

Positions 37–167 constitute a Nudix hydrolase domain; the sequence is RLRKNVCYVV…DVLHLVELGA (131 aa). Position 58 (Leu-58) interacts with Mg(2+). A Nudix box motif is present at residues 76–97; it reads GRMEPGETIVEAMQREVKEEAG.

The protein belongs to the Nudix hydrolase family. Mn(2+) is required as a cofactor. Requires Mg(2+) as cofactor.

It carries out the reaction 8-oxo-dGDP + H2O = 8-oxo-dGMP + phosphate + H(+). The enzyme catalyses 8-oxo-dADP + H2O = 8-oxo-dAMP + phosphate + H(+). The catalysed reaction is 2-oxo-dADP + H2O = 2-oxo-dAMP + phosphate + H(+). It catalyses the reaction 8-oxo-GDP + H2O = 8-oxo-GMP + phosphate + H(+). Functionally, mediates the hydrolysis of oxidized nucleoside diphosphate derivatives. Hydrolyzes 8-oxo-7,8-dihydroguanine (8-oxo-Gua)-containing deoxyribo- and ribonucleoside diphosphates to the monophosphates. Hydrolyzes 8-oxo-dGDP and 8-oxo-GDP with the same efficiencies. Also hydrolyzes 8-OH-dADP and 2-OH-dADP. Exhibited no or minimal hydrolysis activity against 8-oxo-dGTP, 8-oxo-GTP, dGTP, GTP, dGDP and GDP. Probably removes oxidized guanine nucleotides from both the DNA and RNA precursor pools. The polypeptide is 8-oxo-dGDP phosphatase NUDT18 (Mus musculus (Mouse)).